The primary structure comprises 597 residues: Arginine--tRNA ligase (597 aa).

Over residues Q23–Q32 the composition is skewed to low complexity. The disordered stretch occupies residues Q23 to K43. The 'HIGH' region motif lies at P137–H147.

The protein belongs to the class-I aminoacyl-tRNA synthetase family. Monomer.

The protein localises to the cytoplasm. The enzyme catalyses tRNA(Arg) + L-arginine + ATP = L-arginyl-tRNA(Arg) + AMP + diphosphate. The polypeptide is Arginine--tRNA ligase (Synechococcus sp. (strain WH7803)).